Reading from the N-terminus, the 309-residue chain is NAD kinase (309 aa).

The active-site Proton acceptor is the Asp89. NAD(+) contacts are provided by residues 89–90 (DG), 163–164 (NE), His174, Arg191, Asp193, and 204–209 (TAYALS).

It belongs to the NAD kinase family. It depends on a divalent metal cation as a cofactor.

The protein localises to the cytoplasm. It carries out the reaction NAD(+) + ATP = ADP + NADP(+) + H(+). Its function is as follows. Involved in the regulation of the intracellular balance of NAD and NADP, and is a key enzyme in the biosynthesis of NADP. Catalyzes specifically the phosphorylation on 2'-hydroxyl of the adenosine moiety of NAD to yield NADP. This chain is NAD kinase, found in Shewanella sp. (strain MR-4).